The primary structure comprises 157 residues: uncharacterized protein (157 aa).

Positions 1-11 (MGDLEGQDRPD) are enriched in basic and acidic residues. The interval 1–22 (MGDLEGQDRPDPISTMVGPSGT) is disordered.

The protein resides in the mitochondrion. This is an uncharacterized protein from Arabidopsis thaliana (Mouse-ear cress).